The primary structure comprises 691 residues: Lectin-domain containing receptor kinase VI.4 (691 aa).

An N-terminal signal peptide occupies residues 1 to 19 (MGRAKSMVSLLLVLFLVRA). Over 20 to 306 (HVATTETTTE…AKKRGYNGKV (287 aa)) the chain is Extracellular. Residues 26–273 (TTTEFIFHGF…AHYVMGWSFA (248 aa)) are legume-lectin like. A helical transmembrane segment spans residues 307–327 (IALIVALSTVISIMLVLLFLF). The Cytoplasmic portion of the chain corresponds to 328–691 (MMYKKRMQQE…ISSTSLISGR (364 aa)). A Protein kinase domain is found at 363–641 (FKENRVVGTG…LNRDEDVPEI (279 aa)). Residues 369 to 377 (VGTGGFGIV) and Lys392 each bind ATP. Residue Asp491 is the Proton acceptor of the active site.

It in the C-terminal section; belongs to the protein kinase superfamily. Ser/Thr protein kinase family. In the N-terminal section; belongs to the leguminous lectin family.

It localises to the cell membrane. It catalyses the reaction L-seryl-[protein] + ATP = O-phospho-L-seryl-[protein] + ADP + H(+). It carries out the reaction L-threonyl-[protein] + ATP = O-phospho-L-threonyl-[protein] + ADP + H(+). Functionally, involved in negative regulation of abscisic acid response in seed germination. The sequence is that of Lectin-domain containing receptor kinase VI.4 (LECRK64) from Arabidopsis thaliana (Mouse-ear cress).